The sequence spans 655 residues: p-hydroxybenzoic acid efflux pump subunit AaeB (655 aa).

11 helical membrane-spanning segments follow: residues 13 to 33 (FAVKLASAIVLALFVGFHFQL), 38 to 58 (WAVLTAAIVAAGPAFAAGGEP), 69 to 89 (LRIIGTFIGCIAALTIIILMI), 93 to 113 (LLMVLVCCIWAGFCTWLSSLV), 121 to 141 (WGLAGYTALIIVITIQTEPLL), 152 to 172 (EIVIGIVCAIVADLLFSPRSI), 370 to 390 (LFWLWTGWTSGSGAMVMIAVV), 407 to 427 (FLYGTIAALPLGALYFLVILP), 431 to 451 (QSMLLLCISLAVMAFFIGIEV), 459 to 479 (LGALASTINILVLDNPMTFHF), and 482 to 502 (FLDSALGQLVGCFLAMMVILL).

The protein belongs to the aromatic acid exporter ArAE (TC 2.A.85) family.

Its subcellular location is the cell inner membrane. Functionally, forms an efflux pump with AaeA. Could function as a metabolic relief valve, allowing to eliminate certain compounds when they accumulate to high levels in the cell. The chain is p-hydroxybenzoic acid efflux pump subunit AaeB from Enterobacter cloacae subsp. cloacae (strain ATCC 13047 / DSM 30054 / NBRC 13535 / NCTC 10005 / WDCM 00083 / NCDC 279-56).